We begin with the raw amino-acid sequence, 191 residues long: MGLDAVIAEIKEKGRHEAETIVNEGSARKDEIMNAAKQEVEKIHLTVRDEVEKNLSHIISQEEAAAHLIVKRQVLNAQKDLMDQVYKQALDKIVSMPESFHEEAITSLLRKAKEEIPKGRVSCAARDEKILKNVLKQSEFSAYTFGSVIDTDGGIIVESDDGQLQVDYSYRTFLNQVWESGLKDASDSLFA.

It belongs to the V-ATPase E subunit family. Has multiple subunits with at least A(3), B(3), C, D, E, F, H, I and proteolipid K(x).

The protein resides in the cell membrane. In terms of biological role, component of the A-type ATP synthase that produces ATP from ADP in the presence of a proton gradient across the membrane. The sequence is that of A-type ATP synthase subunit E 1 from Methanospirillum hungatei JF-1 (strain ATCC 27890 / DSM 864 / NBRC 100397 / JF-1).